We begin with the raw amino-acid sequence, 479 residues long: ATP-dependent protease ATPase subunit HslU (479 aa).

ATP contacts are provided by residues I32, 74–79 (GVGKTE), D290, E355, and R427.

Belongs to the ClpX chaperone family. HslU subfamily. In terms of assembly, a double ring-shaped homohexamer of HslV is capped on each side by a ring-shaped HslU homohexamer. The assembly of the HslU/HslV complex is dependent on binding of ATP.

It localises to the cytoplasm. In terms of biological role, ATPase subunit of a proteasome-like degradation complex; this subunit has chaperone activity. The binding of ATP and its subsequent hydrolysis by HslU are essential for unfolding of protein substrates subsequently hydrolyzed by HslV. HslU recognizes the N-terminal part of its protein substrates and unfolds these before they are guided to HslV for hydrolysis. This chain is ATP-dependent protease ATPase subunit HslU, found in Leptospira interrogans serogroup Icterohaemorrhagiae serovar Lai (strain 56601).